The following is a 162-amino-acid chain: Cyclic pyranopterin monophosphate synthase (162 aa).

Substrate is bound by residues 75–77 and 113–114; these read LCH and ME. Asp128 is a catalytic residue.

The protein belongs to the MoaC family. As to quaternary structure, homohexamer; trimer of dimers.

The enzyme catalyses (8S)-3',8-cyclo-7,8-dihydroguanosine 5'-triphosphate = cyclic pyranopterin phosphate + diphosphate. The protein operates within cofactor biosynthesis; molybdopterin biosynthesis. Functionally, catalyzes the conversion of (8S)-3',8-cyclo-7,8-dihydroguanosine 5'-triphosphate to cyclic pyranopterin monophosphate (cPMP). The polypeptide is Cyclic pyranopterin monophosphate synthase (Burkholderia lata (strain ATCC 17760 / DSM 23089 / LMG 22485 / NCIMB 9086 / R18194 / 383)).